The sequence spans 158 residues: Glutathione peroxidase homolog BsaA (158 aa).

Thr-36 is an active-site residue.

The protein belongs to the glutathione peroxidase family.

The polypeptide is Glutathione peroxidase homolog BsaA (bsaA) (Staphylococcus epidermidis (strain ATCC 35984 / DSM 28319 / BCRC 17069 / CCUG 31568 / BM 3577 / RP62A)).